A 390-amino-acid polypeptide reads, in one-letter code: Aspergillopepsin-1 (390 aa).

An N-terminal signal peptide occupies residues 1–19; sequence MVNTSLLAALTAYAVAVAA. The propeptide at 20 to 67 is activation peptide; sequence APTAPQVKGFSVNQVAVPKGVYRHPAAQLAKAYGKYHATVPTQVAAAA. Residues 84–387 form the Peptidase A1 domain; it reads YITQVTVGDD…DASGPRLGFA (304 aa). Residues aspartate 100 and aspartate 281 contribute to the active site.

The protein belongs to the peptidase A1 family. Monomer.

Its subcellular location is the secreted. It carries out the reaction Hydrolysis of proteins with broad specificity. Generally favors hydrophobic residues in P1 and P1', but also accepts Lys in P1, which leads to activation of trypsinogen. Does not clot milk.. Inhibited by the microbial peptide pepstatin A. In terms of biological role, secreted aspartic endopeptidase that allows assimilation of proteinaceous substrates. The scissile peptide bond is attacked by a nucleophilic water molecule activated by two aspartic residues in the active site. Shows a broad primary substrate specificity. Favors hydrophobic residues at the P1 and P1' positions, but also accepts a lysine residue in the P1 position, leading to the activation of trypsinogen and chymotrypsinogen A. Hydrolyzes myoglobin, hemoglobin and other natural proteins. Hydrolyzes equine myoglobin between positions 'Met-1' and 'Gly-2', 'Lys-43' and 'Phe-44', and 'Leu-70' and 'Thr-71'. This chain is Aspergillopepsin-1 (pepA), found in Aspergillus pseudoglaucus (Eurotium repens).